Consider the following 150-residue polypeptide: uncharacterized protein (150 aa).

4 consecutive transmembrane segments (helical) span residues Ile12–Phe30, Arg40–Phe62, Ile74–Gly96, and Ala106–Val128.

The protein localises to the cell membrane. This is an uncharacterized protein from Archaeoglobus fulgidus (strain ATCC 49558 / DSM 4304 / JCM 9628 / NBRC 100126 / VC-16).